We begin with the raw amino-acid sequence, 326 residues long: Probable cell division protein WhiA (326 aa).

Residues 275–308 (SLDELGRLADPPMTKDAIAGRIRRLLAMADKRAS) constitute a DNA-binding region (H-T-H motif).

It belongs to the WhiA family.

Its function is as follows. Involved in cell division and chromosome segregation. This is Probable cell division protein WhiA from Renibacterium salmoninarum (strain ATCC 33209 / DSM 20767 / JCM 11484 / NBRC 15589 / NCIMB 2235).